The sequence spans 511 residues: Histidine ammonia-lyase (511 aa).

Residues 142–144 constitute a cross-link (5-imidazolinone (Ala-Gly)); it reads ASG. Residue serine 143 is modified to 2,3-didehydroalanine (Ser).

Belongs to the PAL/histidase family. Contains an active site 4-methylidene-imidazol-5-one (MIO), which is formed autocatalytically by cyclization and dehydration of residues Ala-Ser-Gly.

It is found in the cytoplasm. It carries out the reaction L-histidine = trans-urocanate + NH4(+). It participates in amino-acid degradation; L-histidine degradation into L-glutamate; N-formimidoyl-L-glutamate from L-histidine: step 1/3. The chain is Histidine ammonia-lyase from Rhizobium rhizogenes (Agrobacterium rhizogenes).